Reading from the N-terminus, the 212-residue chain is Ras-related protein Rab-15 (212 aa).

10 residues coordinate GTP: Ser-17, Gly-18, Val-19, Gly-20, Lys-21, Thr-22, Cys-23, Ser-35, Ser-39, and Thr-40. Thr-22 provides a ligand contact to Mg(2+). Short sequence motifs (switch) lie at residues 31-45 (NEFHSSHISTIGVDF) and 63-80 (DTAGQERYQTITKQYYRR). Mg(2+) is bound by residues Thr-40 and Asp-63. The GTP site is built by Gly-66, Asn-121, Lys-122, Asp-124, Ser-151, and Ala-152. S-geranylgeranyl cysteine attachment occurs at residues Cys-210 and Cys-212. Cys-212 carries the post-translational modification Cysteine methyl ester.

This sequence belongs to the small GTPase superfamily. Rab family. In terms of assembly, the GTP bound form of RAB15 interacts with REP15. Interacts (GTP-bound form) with MICAL1, MICAL3, MICALCL, EHBP1 and EHBP1L1. Requires Mg(2+) as cofactor. As to expression, expressed predominantly in neural tissues.

The protein localises to the cell membrane. The enzyme catalyses GTP + H2O = GDP + phosphate + H(+). With respect to regulation, regulated by guanine nucleotide exchange factors (GEFs) which promote the exchange of bound GDP for free GTP. Regulated by GTPase activating proteins (GAPs) which increase the GTP hydrolysis activity. Inhibited by GDP dissociation inhibitors (GDIs). Functionally, the small GTPases Rab are key regulators of intracellular membrane trafficking, from the formation of transport vesicles to their fusion with membranes. Rabs cycle between an inactive GDP-bound form and an active GTP-bound form that is able to recruit to membranes different sets of downstream effectors directly responsible for vesicle formation, movement, tethering and fusion. RAB15 may act in concert with RAB3A in regulating aspects of synaptic vesicle membrane flow within the nerve terminal. In Rattus norvegicus (Rat), this protein is Ras-related protein Rab-15.